The primary structure comprises 590 residues: Protein I'm not dead yet (590 aa).

11 helical membrane-spanning segments follow: residues 43–63 (GLVVFLVPLLCLPVMLLNEGA), 82–102 (ALPLYVTSMIPIVAFPIMGIM), 115–135 (TLVMFMGGIMVALAVEYCNLH), 153–173 (LHFGLIMVTMFLSMWISNAAC), 224–244 (LCYYLGIAYASSLGGCGTIIG), 270–290 (TFMFYSVPSMLVYTLLTFVFL), 329–349 (LGPMSIHEIQVMILFIFMVVM), 373–393 (SMPTIFVVVMCFMLPANYAFL), 457–477 (VLPNSVLLLVVILVAVFLTAF), 509–529 (AGLACSMAFHLPVSTPPNALV), and 540–560 (MAIAGIGPTIITIITLFVFCQ).

It belongs to the SLC13A/DASS transporter (TC 2.A.47) family. NADC subfamily. As to expression, in adults, abundantly expressed in the fat body, basolateral region of midgut cells and oenocytes. Low level expression is seen in the halteres, procardia, restricted regions of the esophagus and hindgut, base of the legs and in a subset of cells in the third segment of the antennae.

The protein localises to the basolateral cell membrane. Functionally, cation-independent electroneutral transporter (not associated with membrane depolarization) of a variety of tricarboxylic and dicarboxylic acid-cycle intermediates. There is also small, but detectable, transport of monocarboxylics. Transport is through the epithelium of the gut and across the plasma membranes of organs involved in intermediary metabolism and storage. Affinity for substrates is citrate &gt; succinate &gt; pyruvate. Fumarate, a-ketoglutarate, and glutarate are also transported, but not lactate. Transport mechanism that is not coupled to Na(+), K(+), or Cl(-). Function is shown in Xenopus oocytes and human retinal pigment epithelial (HRPE) cell lines. This is Protein I'm not dead yet (Indy) from Drosophila melanogaster (Fruit fly).